The following is a 367-amino-acid chain: Probable alcohol dehydrogenase adh (367 aa).

Cys43, His64, Cys97, Cys100, Cys103, Cys111, and Asn163 together coordinate Zn(2+).

The protein belongs to the zinc-containing alcohol dehydrogenase family. Zn(2+) serves as cofactor.

It carries out the reaction a primary alcohol + NAD(+) = an aldehyde + NADH + H(+). The enzyme catalyses a secondary alcohol + NAD(+) = a ketone + NADH + H(+). The chain is Probable alcohol dehydrogenase adh (adh) from Mycobacterium tuberculosis (strain CDC 1551 / Oshkosh).